A 361-amino-acid chain; its full sequence is Phosphoserine aminotransferase (361 aa).

Residue arginine 42 coordinates L-glutamate. Pyridoxal 5'-phosphate contacts are provided by residues 76–77, tryptophan 102, threonine 152, aspartate 172, and glutamine 195; that span reads AS. Lysine 196 bears the N6-(pyridoxal phosphate)lysine mark. Residue 237-238 participates in pyridoxal 5'-phosphate binding; that stretch reads NT.

It belongs to the class-V pyridoxal-phosphate-dependent aminotransferase family. SerC subfamily. In terms of assembly, homodimer. Requires pyridoxal 5'-phosphate as cofactor.

The protein localises to the cytoplasm. It catalyses the reaction O-phospho-L-serine + 2-oxoglutarate = 3-phosphooxypyruvate + L-glutamate. It carries out the reaction 4-(phosphooxy)-L-threonine + 2-oxoglutarate = (R)-3-hydroxy-2-oxo-4-phosphooxybutanoate + L-glutamate. It participates in amino-acid biosynthesis; L-serine biosynthesis; L-serine from 3-phospho-D-glycerate: step 2/3. Its function is as follows. Catalyzes the reversible conversion of 3-phosphohydroxypyruvate to phosphoserine and of 3-hydroxy-2-oxo-4-phosphonooxybutanoate to phosphohydroxythreonine. The protein is Phosphoserine aminotransferase of Halalkalibacterium halodurans (strain ATCC BAA-125 / DSM 18197 / FERM 7344 / JCM 9153 / C-125) (Bacillus halodurans).